The sequence spans 519 residues: Sorting nexin-2 (519 aa).

The segment covering 30–50 (STVSTLESSPSSPEPASLPAE) has biased composition (low complexity). Positions 30–62 (STVSTLESSPSSPEPASLPAEDISANSNGSKPV) are disordered. The residue at position 97 (S97) is a Phosphoserine. A phosphothreonine mark is found at T101 and T104. Residues S117 and S119 each carry the phosphoserine modification. Residues 140 to 269 (FDIEIGVSDP…QFLESSELPR (130 aa)) form the PX domain. Positions 183, 185, 211, and 235 each coordinate a 1,2-diacyl-sn-glycero-3-phospho-(1D-myo-inositol-3-phosphate). S185 is subject to Phosphoserine. The tract at residues 260 to 519 (QFLESSELPR…AFLPEAKAIA (260 aa)) is interaction with RhoG. Phosphoserine is present on S277. The tract at residues 278–295 (GAGILRMVNKAADAVNKM) is membrane-binding amphipathic helix. The region spanning 299 to 519 (MNESDAWFEE…AFLPEAKAIA (221 aa)) is the BAR domain. The residue at position 469 (K469) is an N6-acetyllysine.

This sequence belongs to the sorting nexin family. Predominantly forms heterodimers with BAR domain-containing sorting nexins SNX5, SNX6 and SNX32; can self-associate to form homodimers. The heterodimers are proposed to self-assemble into helical arrays on the membrane to stabilize and expand local membrane curvature underlying endosomal tubule formation. Thought to be a component of the originally described retromer complex (also called SNX-BAR retromer) which is a pentamer containing the heterotrimeric retromer cargo-selective complex (CSC), also described as vacuolar protein sorting subcomplex (VPS), and a heterodimeric membrane-deforming subcomplex formed between SNX1 or SNX2 and SNX5 or SNX6 (also called SNX-BAR subcomplex); the respective CSC and SNX-BAR subcomplexes associate with low affinity. Interacts with SNX5, SNX6, SNX32, VPS26A, VPS29, VPS35, FNBP1, KALRN, RHOG (GDP-bound form).

The protein resides in the early endosome membrane. The protein localises to the cell projection. It is found in the lamellipodium. Functionally, involved in several stages of intracellular trafficking. Interacts with membranes containing phosphatidylinositol 3-phosphate (PtdIns(3P)) or phosphatidylinositol 3,5-bisphosphate (PtdIns(3,5)P2). Acts in part as component of the retromer membrane-deforming SNX-BAR subcomplex. The SNX-BAR retromer mediates retrograde transport of cargo proteins from endosomes to the trans-Golgi network (TGN) and is involved in endosome-to-plasma membrane transport for cargo protein recycling. The SNX-BAR subcomplex functions to deform the donor membrane into a tubular profile called endosome-to-TGN transport carrier (ETC). Can sense membrane curvature and has in vitro vesicle-to-membrane remodeling activity. Required for retrograde endosome-to-TGN transport of TGN38. Promotes KALRN- and RHOG-dependent but retromer-independent membrane remodeling such as lamellipodium formation; the function is dependent on GEF activity of KALRN. This is Sorting nexin-2 (Snx2) from Mus musculus (Mouse).